The following is a 71-amino-acid chain: uncharacterized protein (71 aa).

The 55-residue stretch at 5–59 folds into the HTH cro/C1-type domain; sequence IKEFRAKFNMTQEELAKRVGVRRETIVFLEKGKYNPSLKLAYKIARVFNAKIEDI. The H-T-H motif DNA-binding region spans 16–35; the sequence is QEELAKRVGVRRETIVFLEK.

This is an uncharacterized protein from Archaeoglobus fulgidus (strain ATCC 49558 / DSM 4304 / JCM 9628 / NBRC 100126 / VC-16).